A 170-amino-acid chain; its full sequence is Large ribosomal subunit protein bL17 (170 aa).

This sequence belongs to the bacterial ribosomal protein bL17 family. As to quaternary structure, part of the 50S ribosomal subunit. Contacts protein L32.

This is Large ribosomal subunit protein bL17 from Azobacteroides pseudotrichonymphae genomovar. CFP2.